Reading from the N-terminus, the 555-residue chain is Glutamine--tRNA ligase (555 aa).

A 'HIGH' region motif is present at residues 34–44 (PEPNGYLHIGH). Residues 35-37 (EPN) and 41-47 (HIGHAKS) each bind ATP. L-glutamine-binding residues include Asp-67 and Tyr-212. ATP contacts are provided by residues Thr-231, 261–262 (RL), and 269–271 (MSK). The 'KMSKS' region motif lies at 268–272 (IMSKR).

The protein belongs to the class-I aminoacyl-tRNA synthetase family. Monomer.

It is found in the cytoplasm. It carries out the reaction tRNA(Gln) + L-glutamine + ATP = L-glutaminyl-tRNA(Gln) + AMP + diphosphate. This chain is Glutamine--tRNA ligase, found in Yersinia pseudotuberculosis serotype O:1b (strain IP 31758).